A 355-amino-acid chain; its full sequence is tRNA uridine(34) hydroxylase (355 aa).

Residues 146–240 (DDPDTVFVDM…YARQAKAQGL (95 aa)) form the Rhodanese domain. The active-site Cysteine persulfide intermediate is the C200.

Belongs to the TrhO family.

The enzyme catalyses uridine(34) in tRNA + AH2 + O2 = 5-hydroxyuridine(34) in tRNA + A + H2O. Functionally, catalyzes oxygen-dependent 5-hydroxyuridine (ho5U) modification at position 34 in tRNAs. In Pectobacterium carotovorum subsp. carotovorum (strain PC1), this protein is tRNA uridine(34) hydroxylase.